Here is a 317-residue protein sequence, read N- to C-terminus: mRNA 3'-end-processing protein yth-1 (317 aa).

The segment at 1 to 20 (MATTTQTTTNSLPSGAGGPQ) is disordered. 5 consecutive C3H1-type zinc fingers follow at residues 51–78 (PADRPICKAYASGNCPLKSHCPERHVTA), 93–120 (GFGSLVCKHWLRGLCKKGESCEFLHEYN), 121–149 (LRKMPECNFFVRNGYCSNGDECLYLHIDP), 150–177 (LSRLPPCPHYERGFCPLGPRCDKKHFRR), and 179–202 (LCLYYLAGFCPDGKGCKEGAHPRW). Over residues 202–217 (WTADKDMEKPRAKGEG) the composition is skewed to basic and acidic residues. Residues 202-317 (WTADKDMEKP…GRGGFRGKGH (116 aa)) are disordered. Positions 223-237 (QQQQQQQQQQHMGDA) are enriched in low complexity. Residues 253 to 288 (YMDRERERDRDNREREMMMQGRDRDGGGHDRHKDRF) are compositionally biased toward basic and acidic residues. Gly residues predominate over residues 289–301 (GGGGGGGGGGRGR). A compositionally biased stretch (basic residues) spans 302 to 317 (GGWRGRGRGGFRGKGH).

The protein belongs to the CPSF4/YTH1 family.

The protein localises to the nucleus. Functionally, component of the cleavage factor I (CF I) involved in pre-mRNA 3'-end processing. This chain is mRNA 3'-end-processing protein yth-1 (yth-1), found in Neurospora crassa (strain ATCC 24698 / 74-OR23-1A / CBS 708.71 / DSM 1257 / FGSC 987).